A 354-amino-acid polypeptide reads, in one-letter code: Protein Wnt-11 (354 aa).

The signal sequence occupies residues 1–24; it reads MRARPQVCEALLFALALHTGVCYG. Asn40 and Asn90 each carry an N-linked (GlcNAc...) asparagine glycan. Cystine bridges form between Cys80-Cys91, Cys130-Cys138, and Cys140-Cys157. Asn160 is a glycosylation site (N-linked (GlcNAc...) asparagine). 8 cysteine pairs are disulfide-bonded: Cys209–Cys223, Cys211–Cys218, Cys283–Cys314, Cys299–Cys309, Cys313–Cys353, Cys329–Cys344, Cys331–Cys341, and Cys336–Cys337. Ser215 carries the O-palmitoleoyl serine; by PORCN lipid modification. 2 N-linked (GlcNAc...) asparagine glycosylation sites follow: Asn300 and Asn304.

The protein belongs to the Wnt family. Post-translationally, palmitoleoylation is required for efficient binding to frizzled receptors. Depalmitoleoylation leads to Wnt signaling pathway inhibition.

Its subcellular location is the secreted. The protein localises to the extracellular space. It is found in the extracellular matrix. In terms of biological role, ligand for members of the frizzled family of seven transmembrane receptors. Probable developmental protein. May be a signaling molecule which affects the development of discrete regions of tissues. Is likely to signal over only few cell diameters. This is Protein Wnt-11 (Wnt11) from Mus musculus (Mouse).